The primary structure comprises 193 residues: Thioredoxin peroxidase (193 aa).

The Thioredoxin domain occupies 3-161 (AVVGKLAPSF…ALRLLDAFQF (159 aa)). Cys48 serves as the catalytic Cysteine sulfenic acid (-SOH) intermediate.

This sequence belongs to the peroxiredoxin family. AhpC/Prx1 subfamily. Homodimer; disulfide-linked, upon oxidation.

It catalyses the reaction a hydroperoxide + [thioredoxin]-dithiol = an alcohol + [thioredoxin]-disulfide + H2O. Its function is as follows. Thiol-specific peroxidase that catalyzes the reduction of hydrogen peroxide and organic hydroperoxides to water and alcohols, respectively. Plays a role in cell protection against oxidative stress by detoxifying peroxides and as sensor of hydrogen peroxide-mediated signaling events. This chain is Thioredoxin peroxidase (TPX), found in Echinococcus granulosus (Hydatid tapeworm).